The chain runs to 229 residues: Uracil-DNA glycosylase (229 aa).

Aspartate 64 acts as the Proton acceptor in catalysis.

It belongs to the uracil-DNA glycosylase (UDG) superfamily. UNG family.

The protein localises to the cytoplasm. The enzyme catalyses Hydrolyzes single-stranded DNA or mismatched double-stranded DNA and polynucleotides, releasing free uracil.. Its function is as follows. Excises uracil residues from the DNA which can arise as a result of misincorporation of dUMP residues by DNA polymerase or due to deamination of cytosine. This chain is Uracil-DNA glycosylase, found in Escherichia fergusonii (strain ATCC 35469 / DSM 13698 / CCUG 18766 / IAM 14443 / JCM 21226 / LMG 7866 / NBRC 102419 / NCTC 12128 / CDC 0568-73).